The primary structure comprises 354 residues: Uroporphyrinogen decarboxylase (354 aa).

Substrate contacts are provided by residues 30–34 (RQAGR), Phe-49, Asp-79, Tyr-156, Ser-211, and His-326.

This sequence belongs to the uroporphyrinogen decarboxylase family. In terms of assembly, homodimer.

Its subcellular location is the cytoplasm. It catalyses the reaction uroporphyrinogen III + 4 H(+) = coproporphyrinogen III + 4 CO2. Its pathway is porphyrin-containing compound metabolism; protoporphyrin-IX biosynthesis; coproporphyrinogen-III from 5-aminolevulinate: step 4/4. Functionally, catalyzes the decarboxylation of four acetate groups of uroporphyrinogen-III to yield coproporphyrinogen-III. In Salinibacter ruber (strain DSM 13855 / M31), this protein is Uroporphyrinogen decarboxylase.